The sequence spans 369 residues: Mitogen-activated protein kinase 4 (369 aa).

A Protein kinase domain is found at Tyr-32–Met-319. Residues Ile-38–Val-46 and Lys-61 each bind ATP. Residue Asp-158 is the Proton acceptor of the active site. Thr-191 is modified (phosphothreonine). Residues Thr-191–Tyr-193 carry the TXY motif. Tyr-193 is subject to Phosphotyrosine.

The protein belongs to the protein kinase superfamily. CMGC Ser/Thr protein kinase family. MAP kinase subfamily. Post-translationally, dually phosphorylated on Thr-191 and Tyr-193, which activates the enzyme. Expressed in leaves and panicles.

It carries out the reaction L-seryl-[protein] + ATP = O-phospho-L-seryl-[protein] + ADP + H(+). It catalyses the reaction L-threonyl-[protein] + ATP = O-phospho-L-threonyl-[protein] + ADP + H(+). With respect to regulation, activated by threonine and tyrosine phosphorylation. This Oryza sativa subsp. japonica (Rice) protein is Mitogen-activated protein kinase 4 (MPK4).